The chain runs to 137 residues: Protein FrxA (137 aa).

The polypeptide is Protein FrxA (frxA) (Pyrococcus furiosus (strain ATCC 43587 / DSM 3638 / JCM 8422 / Vc1)).